The chain runs to 450 residues: Bifunctional protein GlmU (450 aa).

A pyrophosphorylase region spans residues 1–236 (MTAHKPFSAV…AWEVSGVNNR (236 aa)). Residues 12 to 15 (LAAG), Lys-26, Gln-79, 84 to 85 (GT), 107 to 109 (YGD), Gly-147, Glu-162, Asn-177, and Asn-234 contribute to the UDP-N-acetyl-alpha-D-glucosamine site. Asp-109 is a binding site for Mg(2+). Mg(2+) is bound at residue Asn-234. The linker stretch occupies residues 237–257 (AELASLESLWQNRKRQDVMKD). The interval 258–450 (GASLIAPETV…KKFRQRKKKK (193 aa)) is N-acetyltransferase. Positions 323 and 341 each coordinate UDP-N-acetyl-alpha-D-glucosamine. The active-site Proton acceptor is the His-353. UDP-N-acetyl-alpha-D-glucosamine-binding residues include Tyr-356 and Asn-367. Acetyl-CoA is bound by residues 376-377 (NY), Ser-395, Ala-413, and Arg-430.

The protein in the N-terminal section; belongs to the N-acetylglucosamine-1-phosphate uridyltransferase family. This sequence in the C-terminal section; belongs to the transferase hexapeptide repeat family. As to quaternary structure, homotrimer. It depends on Mg(2+) as a cofactor.

Its subcellular location is the cytoplasm. The enzyme catalyses alpha-D-glucosamine 1-phosphate + acetyl-CoA = N-acetyl-alpha-D-glucosamine 1-phosphate + CoA + H(+). It catalyses the reaction N-acetyl-alpha-D-glucosamine 1-phosphate + UTP + H(+) = UDP-N-acetyl-alpha-D-glucosamine + diphosphate. The protein operates within nucleotide-sugar biosynthesis; UDP-N-acetyl-alpha-D-glucosamine biosynthesis; N-acetyl-alpha-D-glucosamine 1-phosphate from alpha-D-glucosamine 6-phosphate (route II): step 2/2. It functions in the pathway nucleotide-sugar biosynthesis; UDP-N-acetyl-alpha-D-glucosamine biosynthesis; UDP-N-acetyl-alpha-D-glucosamine from N-acetyl-alpha-D-glucosamine 1-phosphate: step 1/1. Its pathway is bacterial outer membrane biogenesis; LPS lipid A biosynthesis. Its function is as follows. Catalyzes the last two sequential reactions in the de novo biosynthetic pathway for UDP-N-acetylglucosamine (UDP-GlcNAc). The C-terminal domain catalyzes the transfer of acetyl group from acetyl coenzyme A to glucosamine-1-phosphate (GlcN-1-P) to produce N-acetylglucosamine-1-phosphate (GlcNAc-1-P), which is converted into UDP-GlcNAc by the transfer of uridine 5-monophosphate (from uridine 5-triphosphate), a reaction catalyzed by the N-terminal domain. The polypeptide is Bifunctional protein GlmU (Zymomonas mobilis subsp. mobilis (strain ATCC 31821 / ZM4 / CP4)).